A 65-amino-acid polypeptide reads, in one-letter code: UPF0434 protein CC_0108 (65 aa).

The protein belongs to the UPF0434 family.

The sequence is that of UPF0434 protein CC_0108 from Caulobacter vibrioides (strain ATCC 19089 / CIP 103742 / CB 15) (Caulobacter crescentus).